Reading from the N-terminus, the 74-residue chain is Translation initiation factor IF-1 (74 aa).

The 72-residue stretch at 1–72 (MADTEKLKML…TRGRITYRHR (72 aa)) folds into the S1-like domain.

This sequence belongs to the IF-1 family. In terms of assembly, component of the 30S ribosomal translation pre-initiation complex which assembles on the 30S ribosome in the order IF-2 and IF-3, IF-1 and N-formylmethionyl-tRNA(fMet); mRNA recruitment can occur at any time during PIC assembly.

It is found in the cytoplasm. Functionally, one of the essential components for the initiation of protein synthesis. Stabilizes the binding of IF-2 and IF-3 on the 30S subunit to which N-formylmethionyl-tRNA(fMet) subsequently binds. Helps modulate mRNA selection, yielding the 30S pre-initiation complex (PIC). Upon addition of the 50S ribosomal subunit IF-1, IF-2 and IF-3 are released leaving the mature 70S translation initiation complex. The polypeptide is Translation initiation factor IF-1 (Ureaplasma parvum serovar 3 (strain ATCC 700970)).